Reading from the N-terminus, the 199-residue chain is MNQVYFLDIFMFVFVLQFLFYFKEGMLNTLVKKFLNSLVGVFSYSNTLPLSSVISVFTFIILLTCCFGGYFTYSFCPCGMVEFTFVYAAVAWLSTLLTFISSEKFSVYMSKPGDTYLKTLSMLLVEIVSEFSRPLALTVRLTVNIMVGHLISMMLYQGLELSMGDQYVWLSIFAIMMECFVFFIQSYIFSRLIFLYLNE.

5 consecutive transmembrane segments (helical) span residues 2–22 (NQVY…LFYF), 53–73 (VISV…YFTY), 80–100 (MVEF…LTFI), 141–161 (LTVN…GLEL), and 169–189 (WLSI…SYIF).

It belongs to the ATPase A chain family. In terms of assembly, F-type ATPases have 2 components, CF(1) - the catalytic core - and CF(0) - the membrane proton channel. CF(1) has five subunits: alpha(3), beta(3), gamma(1), delta(1), epsilon(1). CF(0) has three main subunits: a, b and c.

It is found in the mitochondrion inner membrane. Mitochondrial membrane ATP synthase (F(1)F(0) ATP synthase or Complex V) produces ATP from ADP in the presence of a proton gradient across the membrane which is generated by electron transport complexes of the respiratory chain. F-type ATPases consist of two structural domains, F(1) - containing the extramembraneous catalytic core and F(0) - containing the membrane proton channel, linked together by a central stalk and a peripheral stalk. During catalysis, ATP synthesis in the catalytic domain of F(1) is coupled via a rotary mechanism of the central stalk subunits to proton translocation. Key component of the proton channel; it may play a direct role in the translocation of protons across the membrane. The protein is ATP synthase subunit a (atp6) of Caenorhabditis briggsae.